Consider the following 91-residue polypeptide: Small ribosomal subunit protein uS19 (91 aa).

The protein belongs to the universal ribosomal protein uS19 family.

Its function is as follows. Protein S19 forms a complex with S13 that binds strongly to the 16S ribosomal RNA. The polypeptide is Small ribosomal subunit protein uS19 (Bordetella avium (strain 197N)).